A 1038-amino-acid chain; its full sequence is E3 ubiquitin-protein ligase Topors (1038 aa).

Residues 53–96 (ESGSESGDNEAEEPVSAGPDNANAIGEPGTSASAAEENGTVERN) form a disordered region. The segment at 102 to 141 (CAICLSRCRRKCFTDSCMHQFCFKCLCEWSKIKPECPLCK) adopts an RING-type zinc-finger fold. The tract at residues 495 to 682 (AAANAEVAAI…SSDSSTTNSE (188 aa)) is interaction with hairy/hry. Disordered stretches follow at residues 627–858 (DQLR…SSTA) and 972–1038 (GESE…LLPY). Residues 633 to 642 (RSIRSKKSRR) are compositionally biased toward basic residues. Positions 643–668 (SSMPARSDSGSSPSSCSSSSFHFSSS) are enriched in low complexity. The segment covering 686 to 699 (KKSRKRVANNKRSK) has biased composition (basic residues). The span at 723 to 744 (QQQISQKKPQRQPESSSDSPSS) shows a compositional bias: low complexity. Residues 792-801 (ATLEDRKPVK) are compositionally biased toward basic and acidic residues. At threonine 820 the chain carries Phosphothreonine. Residue serine 822 is modified to Phosphoserine. Positions 841–858 (SHSNQSSQSASLASSSTA) are enriched in low complexity. Positions 987-1031 (EEQDEEDEEDEDQEEDDQEEEKAAEEEEEEEEDDDDSDNHDENDE) are enriched in acidic residues.

As to quaternary structure, interacts with hairy/hry, p53 and Top1. Interacts with the gypsy chromatin insulator complex, composed of Cp190, mod(mdg4) and su(Hw); interacts directly with mod(mdg4) and su(Hw). Interacts with Lam/lamin.

It is found in the nucleus. The protein resides in the chromosome. It catalyses the reaction S-ubiquitinyl-[E2 ubiquitin-conjugating enzyme]-L-cysteine + [acceptor protein]-L-lysine = [E2 ubiquitin-conjugating enzyme]-L-cysteine + N(6)-ubiquitinyl-[acceptor protein]-L-lysine.. In terms of biological role, functions as a ubiquitin-protein E3 ligase. Negatively regulates the transcriptional repressor hairy/hry by promoting its ubiquitination and subsequent degradation. Also directs the nuclear organization of the gypsy chromatin insulator. Chromatin insulators are regulatory elements which establish independent domains of transcriptional activity within eukaryotic genomes. Insulators have two defining properties; they can block the communication between an enhancer and a promoter when placed between them, and can also buffer transgenes from position effect variegation (PEV). Insulators are proposed to structure the chromatin fiber into independent domains of differing transcriptional potential by promoting the formation of distinct chromatin loops. This chromatin looping may require the formation of insulator bodies, where homotypic interactions between individual subunits of the insulator complex could promote the clustering of widely spaced insulators at the nuclear periphery. Within the gypsy insulator complex, this protein may promote formation of nuclear insulator bodies by recruiting individual insulator complexes to the nuclear lamina. The sequence is that of E3 ubiquitin-protein ligase Topors (Topors) from Drosophila melanogaster (Fruit fly).